The primary structure comprises 348 residues: DnaJ homolog subfamily B member 5 (348 aa).

Positions 4 to 68 (DYYKILGIPS…KKRGLYDQYG (65 aa)) constitute a J domain.

The chain is DnaJ homolog subfamily B member 5 (DNAJB5) from Homo sapiens (Human).